Reading from the N-terminus, the 878-residue chain is Phosphoenolpyruvate carboxylase (878 aa).

Catalysis depends on residues His-137 and Lys-545.

It belongs to the PEPCase type 1 family. Mg(2+) serves as cofactor.

The catalysed reaction is oxaloacetate + phosphate = phosphoenolpyruvate + hydrogencarbonate. Functionally, forms oxaloacetate, a four-carbon dicarboxylic acid source for the tricarboxylic acid cycle. This is Phosphoenolpyruvate carboxylase from Photorhabdus laumondii subsp. laumondii (strain DSM 15139 / CIP 105565 / TT01) (Photorhabdus luminescens subsp. laumondii).